Reading from the N-terminus, the 144-residue chain is MAFNFTAFTYIVALIGDAFLIFFAIFHVIAFDELKTDYKNPIDQCNSLNPLVLPEYLLHLFLNLLFLFCGEWYSLCLNIPLIAYHIWRYKNRPLMSGPGLYDPTTVLKTDTLSRNLREGWIKLAVYLISFFYYIYGMVYSLIST.

The Lumenal portion of the chain corresponds to 1–10; the sequence is MAFNFTAFTY. Residues 1 to 57 form an interaction with grk region; sequence MAFNFTAFTYIVALIGDAFLIFFAIFHVIAFDELKTDYKNPIDQCNSLNPLVLPEYL. The helical transmembrane segment at 11 to 31 threads the bilayer; sequence IVALIGDAFLIFFAIFHVIAF. Residues 32–56 lie on the Cytoplasmic side of the membrane; the sequence is DELKTDYKNPIDQCNSLNPLVLPEY. Residues 57-77 traverse the membrane as a helical segment; sequence LLHLFLNLLFLFCGEWYSLCL. Residues 78–122 are Lumenal-facing; sequence NIPLIAYHIWRYKNRPLMSGPGLYDPTTVLKTDTLSRNLREGWIK. The chain crosses the membrane as a helical span at residues 123–143; the sequence is LAVYLISFFYYIYGMVYSLIS. Thr-144 is a topological domain (cytoplasmic).

It belongs to the cornichon family. In terms of assembly, interacts with grk.

The protein resides in the endoplasmic reticulum membrane. Its function is as follows. Acts as a cargo receptor necessary for the transportation of gurken (grk) to a transitional endoplasmic reticulum (tER) site and promotes its incorporation into coat protein complex II (COPII) vesicles. Associated with gurken, produces a signal received by torpedo resulting in a signaling pathway that first establishes posterior follicle cell fates and normal localization of the anterior and posterior determinants, later they act in a signaling event inducing dorsal follicle cell fates and regulating the dorsal-ventral pattern of egg and embryo. This is Protein cornichon (cni) from Drosophila virilis (Fruit fly).